Here is a 379-residue protein sequence, read N- to C-terminus: Omega-3 fatty acid desaturase, endoplasmic reticulum (379 aa).

The chain crosses the membrane as a helical span at residues Leu52 to Leu72. The Histidine box-1 signature appears at His97–His101. A Histidine box-2 motif is present at residues His133–His137. Transmembrane regions (helical) follow at residues Thr213–Leu233 and Phe236–Leu256. The short motif at His300–His304 is the Histidine box-3 element.

The protein belongs to the fatty acid desaturase type 1 family.

It localises to the endoplasmic reticulum membrane. The protein operates within lipid metabolism; polyunsaturated fatty acid biosynthesis. Functionally, ER (microsomal) omega-3 fatty acid desaturase introduces the third double bond in the biosynthesis of 18:3 fatty acids, important constituents of plant membranes. It is thought to use cytochrome b5 as an electron donor and to act on fatty acids esterified to phosphatidylcholine and, possibly, other phospholipids. This Nicotiana tabacum (Common tobacco) protein is Omega-3 fatty acid desaturase, endoplasmic reticulum (FAD3).